The following is an 86-amino-acid chain: Small ribosomal subunit protein bS16 (86 aa).

Belongs to the bacterial ribosomal protein bS16 family.

This Trichormus variabilis (strain ATCC 29413 / PCC 7937) (Anabaena variabilis) protein is Small ribosomal subunit protein bS16.